A 290-amino-acid chain; its full sequence is Pyridoxal kinase PdxY (290 aa).

Substrate contacts are provided by residues Ser-12 and Thr-47–Gln-48. ATP-binding positions include Asp-114, Glu-151, Lys-184, and Arg-211–Leu-214. Asp-225 serves as a coordination point for substrate.

The protein belongs to the pyridoxine kinase family. PdxY subfamily. In terms of assembly, homodimer. It depends on Mg(2+) as a cofactor.

The catalysed reaction is pyridoxal + ATP = pyridoxal 5'-phosphate + ADP + H(+). It functions in the pathway cofactor metabolism; pyridoxal 5'-phosphate salvage; pyridoxal 5'-phosphate from pyridoxal: step 1/1. Its function is as follows. Pyridoxal kinase involved in the salvage pathway of pyridoxal 5'-phosphate (PLP). Catalyzes the phosphorylation of pyridoxal to PLP. This is Pyridoxal kinase PdxY from Pseudomonas putida (strain ATCC 47054 / DSM 6125 / CFBP 8728 / NCIMB 11950 / KT2440).